A 331-amino-acid chain; its full sequence is Inositol 2-dehydrogenase (331 aa).

The protein belongs to the Gfo/Idh/MocA family. Homotetramer.

It catalyses the reaction myo-inositol + NAD(+) = scyllo-inosose + NADH + H(+). Its function is as follows. Involved in the oxidation of myo-inositol (MI) to 2-keto-myo-inositol (2KMI or 2-inosose). The chain is Inositol 2-dehydrogenase from Renibacterium salmoninarum (strain ATCC 33209 / DSM 20767 / JCM 11484 / NBRC 15589 / NCIMB 2235).